Reading from the N-terminus, the 115-residue chain is Large ribosomal subunit protein bL20c (115 aa).

It belongs to the bacterial ribosomal protein bL20 family.

The protein resides in the plastid. It localises to the chloroplast. Functionally, binds directly to 23S ribosomal RNA and is necessary for the in vitro assembly process of the 50S ribosomal subunit. It is not involved in the protein synthesizing functions of that subunit. The sequence is that of Large ribosomal subunit protein bL20c from Gnetum parvifolium (Small-leaved jointfir).